We begin with the raw amino-acid sequence, 275 residues long: Protein COFACTOR ASSEMBLY OF COMPLEX C SUBUNIT B CCB2, chloroplastic (275 aa).

The N-terminal 19 residues, 1 to 19 (MSIQICNFPFHPKFALQPR), are a transit peptide targeting the chloroplast. The Stromal segment spans residues 20 to 65 (AQRSTRIFARTENDSPQSKTSDQQLNLSVLRFTFGIPGFDESYLPR). The helical transmembrane segment at 66–86 (WIGYGFGSLLLLNHFSASAPI) threads the bilayer. At 87-93 (SESQMRS) the chain is on the lumenal side. Residues 94 to 114 (EALGLSLAAFSIALPYIGKFL) form a helical membrane-spanning segment. Residues 115–275 (KGSVVEQRSL…IGAMAEKFRG (161 aa)) lie on the Stromal side of the membrane.

It is found in the plastid. Its subcellular location is the chloroplast thylakoid membrane. Its function is as follows. Required for the biogenesis and accumulation of native cytochrome b6 in the thylakoid membrane. Controls the conversion of apocytochrome b6 to holocytochrome b6. Required for covalent binding of the c-type heme to cytochrome b6. The polypeptide is Protein COFACTOR ASSEMBLY OF COMPLEX C SUBUNIT B CCB2, chloroplastic (Arabidopsis thaliana (Mouse-ear cress)).